The chain runs to 464 residues: Rab GDP-dissociation inhibitor (464 aa).

Belongs to the Rab GDI family. As to quaternary structure, interacts with the GDP-bound form of Rab GTPase YPT7.

Its function is as follows. Regulates the GDP/GTP exchange reaction of YPT7 by inhibiting the dissociation of GDP from it, and the subsequent binding of GTP to YTP7. This Pyricularia oryzae (strain 70-15 / ATCC MYA-4617 / FGSC 8958) (Rice blast fungus) protein is Rab GDP-dissociation inhibitor (GDI1).